A 116-amino-acid polypeptide reads, in one-letter code: RutC family protein HI_1627 (116 aa).

Belongs to the RutC family.

This is RutC family protein HI_1627 from Haemophilus influenzae (strain ATCC 51907 / DSM 11121 / KW20 / Rd).